Consider the following 255-residue polypeptide: Hydroxyacylglutathione hydrolase (255 aa).

Residues H56, H58, D60, H61, H114, D133, and H171 each contribute to the Zn(2+) site.

The protein belongs to the metallo-beta-lactamase superfamily. Glyoxalase II family. Monomer. It depends on Zn(2+) as a cofactor.

The enzyme catalyses an S-(2-hydroxyacyl)glutathione + H2O = a 2-hydroxy carboxylate + glutathione + H(+). It functions in the pathway secondary metabolite metabolism; methylglyoxal degradation; (R)-lactate from methylglyoxal: step 2/2. Its function is as follows. Thiolesterase that catalyzes the hydrolysis of S-D-lactoyl-glutathione to form glutathione and D-lactic acid. This chain is Hydroxyacylglutathione hydrolase, found in Roseobacter denitrificans (strain ATCC 33942 / OCh 114) (Erythrobacter sp. (strain OCh 114)).